A 350-amino-acid polypeptide reads, in one-letter code: GTPase Obg (350 aa).

The Obg domain maps to 1–159 (MKLVDEAEIE…RTLKLELKLL (159 aa)). Positions 126-147 (GNMHFKSSTNRSPRQALPGEPG) are disordered. The OBG-type G domain occupies 160 to 337 (ADVGLLGFPN…IMSRIMAFFD (178 aa)). GTP is bound by residues 166-173 (GFPNAGKS), 191-195 (FTTLY), 213-216 (DIPG), 287-290 (NKAD), and 318-320 (SAL). Residues S173 and T193 each coordinate Mg(2+).

It belongs to the TRAFAC class OBG-HflX-like GTPase superfamily. OBG GTPase family. As to quaternary structure, monomer. Requires Mg(2+) as cofactor.

It localises to the cytoplasm. Its function is as follows. An essential GTPase which binds GTP, GDP and possibly (p)ppGpp with moderate affinity, with high nucleotide exchange rates and a fairly low GTP hydrolysis rate. Plays a role in control of the cell cycle, stress response, ribosome biogenesis and in those bacteria that undergo differentiation, in morphogenesis control. The polypeptide is GTPase Obg (Stenotrophomonas maltophilia (strain K279a)).